The primary structure comprises 102 residues: Small ribosomal subunit protein uS10 (102 aa).

This sequence belongs to the universal ribosomal protein uS10 family. In terms of assembly, part of the 30S ribosomal subunit.

Involved in the binding of tRNA to the ribosomes. The polypeptide is Small ribosomal subunit protein uS10 (Clostridium botulinum (strain ATCC 19397 / Type A)).